Here is a 141-residue protein sequence, read N- to C-terminus: Cholinesterase (141 aa).

An N-linked (GlcNAc...) asparagine glycan is attached at N39. 49–50 (GG) provides a ligand contact to substrate. S131 (acyl-ester intermediate) is an active-site residue. Position 131 is a phosphoserine (S131).

It belongs to the type-B carboxylesterase/lipase family. As to quaternary structure, homotetramer; disulfide-linked. Dimer of dimers. In terms of tissue distribution, present in most cells except erythrocytes.

It is found in the secreted. The catalysed reaction is an acylcholine + H2O = a carboxylate + choline + H(+). In terms of biological role, esterase with broad substrate specificity. Contributes to the inactivation of the neurotransmitter acetylcholine. Can degrade neurotoxic organophosphate esters. This is Cholinesterase (BCHE) from Canis lupus familiaris (Dog).